A 1038-amino-acid chain; its full sequence is Probable LRR receptor-like serine/threonine-protein kinase At1g53430 (1038 aa).

A signal peptide spans 1-28 (MGFIFSTEKVVYVLLLIFVCLENFGSNA). Residues 29–609 (QLLPEDEVQT…VDTGKPLSNG (581 aa)) lie on the Extracellular side of the membrane. N-linked (GlcNAc...) asparagine glycosylation is found at Asn48, Asn77, Asn85, Asn112, and Asn127. LRR repeat units follow at residues 113–137 (LTRL…LSQI), 139–160 (LEIL…LGDI), 161–184 (TTLT…LGNL), 185–208 (RSLK…LSNL), 210–234 (NLTE…NWTL), and 236–256 (ERLD…ISNL). N-linked (GlcNAc...) asparagine glycosylation is found at Asn196, Asn210, Asn231, Asn255, and Asn258. 5 LRR repeats span residues 259 to 281 (LTEL…LRNL), 282 to 305 (MKMK…IGSM), 306 to 328 (SELK…TFRN), 330 to 351 (DAFN…QFII), and 352 to 374 (NSKE…SCNQ). Asn339, Asn363, Asn471, and Asn561 each carry an N-linked (GlcNAc...) asparagine glycan. The chain crosses the membrane as a helical span at residues 610-630 (AVAGIVIAACAVFGLLVLVIL). At 631 to 1038 (RLTGYLGGKE…LDDLTDVKIE (408 aa)) the chain is on the cytoplasmic side. Phosphothreonine is present on Thr658. Residues 669 to 950 (FDPENKIGEG…EGKIKVQPPL (282 aa)) enclose the Protein kinase domain. ATP is bound by residues 675 to 683 (IGEGGFGPV) and Lys697. Tyr742 carries the phosphotyrosine modification. Residue Asp795 is the Proton acceptor of the active site. Ser828 is modified (phosphoserine). Phosphothreonine occurs at positions 829 and 834. Tyr842 is subject to Phosphotyrosine. A disordered region spans residues 984-1038 (RNREQDISSSSMDGPWVDSSFSEPGKDVSLQQQEEGRSSSSSRKLLDDLTDVKIE). Positions 1027–1038 (KLLDDLTDVKIE) are enriched in basic and acidic residues.

The protein belongs to the protein kinase superfamily. Ser/Thr protein kinase family.

The protein localises to the membrane. The enzyme catalyses L-seryl-[protein] + ATP = O-phospho-L-seryl-[protein] + ADP + H(+). It catalyses the reaction L-threonyl-[protein] + ATP = O-phospho-L-threonyl-[protein] + ADP + H(+). The chain is Probable LRR receptor-like serine/threonine-protein kinase At1g53430 from Arabidopsis thaliana (Mouse-ear cress).